The primary structure comprises 248 residues: Isoprenyl transferase (248 aa).

Asp-23 is an active-site residue. A Mg(2+)-binding site is contributed by Asp-23. Substrate-binding positions include 24 to 27 (GNGR), Trp-28, Arg-36, His-40, and 68 to 70 (STE). The active-site Proton acceptor is Asn-71. Residues Trp-72, Arg-74, Arg-185, and 191-193 (RIS) each bind substrate. Residue Glu-204 participates in Mg(2+) binding.

This sequence belongs to the UPP synthase family. As to quaternary structure, homodimer. Requires Mg(2+) as cofactor.

In terms of biological role, catalyzes the condensation of isopentenyl diphosphate (IPP) with allylic pyrophosphates generating different type of terpenoids. This Neisseria gonorrhoeae (strain ATCC 700825 / FA 1090) protein is Isoprenyl transferase.